The chain runs to 134 residues: Cystatin-1 (134 aa).

The first 17 residues, 1-17 (MKAIYLILTVLCGFSAS), serve as a signal peptide directing secretion. Positions 21–116 (GGWRDKDVDD…CTAIIWTRSW (96 aa)) constitute a Cystatin domain. Positions 65-69 (QVVSG) match the Secondary area of contact motif. 2 disulfides stabilise this stretch: C83–C96 and C107–C127.

It belongs to the cystatin family. As to expression, expressed by the venom gland.

The protein resides in the secreted. Its function is as follows. Inhibits various C1 cysteine proteases. This protein has no toxic activity and its function in the venom is unknown. It may play a role as a housekeeping or regulatory protein. This chain is Cystatin-1, found in Chilobrachys guangxiensis (Chinese earth tiger tarantula).